Here is a 201-residue protein sequence, read N- to C-terminus: Small ribosomal subunit protein uS4c (201 aa).

The interval 15-43 is disordered; the sequence is LGALPGLTSKRPSPGSDLRNQSRSGKRSQ. The S4 RNA-binding domain occupies 89–150; it reads MRLDNILFRL…EQRSRALIQK (62 aa).

It belongs to the universal ribosomal protein uS4 family. Part of the 30S ribosomal subunit. Contacts protein S5. The interaction surface between S4 and S5 is involved in control of translational fidelity.

The protein resides in the plastid. Its subcellular location is the chloroplast. Its function is as follows. One of the primary rRNA binding proteins, it binds directly to 16S rRNA where it nucleates assembly of the body of the 30S subunit. With S5 and S12 plays an important role in translational accuracy. The chain is Small ribosomal subunit protein uS4c (rps4) from Ceratophyllum demersum (Rigid hornwort).